We begin with the raw amino-acid sequence, 841 residues long: Protein translocase subunit SecA (841 aa).

ATP is bound by residues Gln85, 103-107 (GEGKT), and Asp492. The disordered stretch occupies residues 790-814 (IQGQTTAHQPKEGDEEKQAKKKPVR). Residues 798 to 807 (QPKEGDEEKQ) show a composition bias toward basic and acidic residues. Zn(2+)-binding residues include Cys825, Cys827, Cys836, and Cys837.

Belongs to the SecA family. As to quaternary structure, monomer and homodimer. Part of the essential Sec protein translocation apparatus which comprises SecA, SecYEG and auxiliary proteins SecDF. Other proteins may also be involved. It depends on Zn(2+) as a cofactor.

The protein resides in the cell membrane. It localises to the cytoplasm. It catalyses the reaction ATP + H2O + cellular proteinSide 1 = ADP + phosphate + cellular proteinSide 2.. Part of the Sec protein translocase complex. Interacts with the SecYEG preprotein conducting channel. Has a central role in coupling the hydrolysis of ATP to the transfer of proteins into and across the cell membrane, serving as an ATP-driven molecular motor driving the stepwise translocation of polypeptide chains across the membrane. The protein is Protein translocase subunit SecA of Bacillus licheniformis (strain ATCC 14580 / DSM 13 / JCM 2505 / CCUG 7422 / NBRC 12200 / NCIMB 9375 / NCTC 10341 / NRRL NRS-1264 / Gibson 46).